The primary structure comprises 540 residues: Receptor-interacting serine/threonine-protein kinase 2 (540 aa).

The Protein kinase domain occupies 18-294 (LADLRYLSRG…KCLIELEPVL (277 aa)). Residues 24–32 (LSRGASGTV) and lysine 47 each bind ATP. The interval 65-73 (REAEILHKA) is helix alphaC. Aspartate 146 (proton acceptor) is an active-site residue. Positions 167–193 (LSKWRMMSLSQSRSSKSAPEGGTIVYM) are activation segment (AS). Serine 168 carries the post-translational modification Phosphoserine. Serine 174 carries the post-translational modification Phosphoserine; alternate. Residue serine 176 is modified to Phosphoserine; by autocatalysis. Serine 178 carries the post-translational modification Phosphoserine; alternate. Serine 180 carries the post-translational modification Phosphoserine. At serine 181 the chain carries Phosphoserine; alternate. Residue lysine 209 forms a Glycyl lysine isopeptide (Lys-Gly) (interchain with G-Cter in ubiquitin) linkage. The interval 318–367 (SRTVHLSDKKKRELSPNIPVNSGPREESCGSSQLHKTSGSPGTSRSLSAP) is disordered. A compositionally biased stretch (basic and acidic residues) spans 322-331 (HLSDKKKREL). Polar residues predominate over residues 346 to 366 (CGSSQLHKTSGSPGTSRSLSA). Phosphoserine occurs at positions 363 and 391. The CARD domain occupies 432 to 524 (GIAQQWIQSK…LQPYPEILVL (93 aa)). Phosphotyrosine; by autocatalysis is present on tyrosine 472. A phosphoserine mark is found at serine 525, serine 527, and serine 529. Residue lysine 536 forms a Glycyl lysine isopeptide (Lys-Gly) (interchain with G-Cter in ubiquitin) linkage. The residue at position 537 (serine 537) is a Phosphoserine.

This sequence belongs to the protein kinase superfamily. TKL Ser/Thr protein kinase family. In terms of assembly, interacts (via CARD domain) with NOD2 (via CARD domain). Interacts (via CARD domain) with NOD1 (via CARD domain). Homooligomer; following interaction with NOD1 or NOD2, homooligomerizes via its CARD domain and forms long filaments named RIPosomes. Found in a signaling complex consisting of at least ARHGEF2, NOD2 and RIPK2. Interacts with ARHGEF2; the interaction mediates tyrosine phosphorylation of RIPK2 by Src kinase CSK. Interacts with MAP3K4; this interaction sequesters RIPK2 from the NOD2 signaling pathway. Interacts with IKBKG/NEMO. The polyubiquitinated protein interacts with MAP3K7/TAK1; interaction is indirect and is mediated by TAB2 and TAB3 that bind to polyubiquitin chains attached to RIPK2. Binds to CFLAR/CLARP and CASP1 via their CARD domains. Binds to BIRC3/c-IAP1 and BIRC2/c-IAP2, TRAF1, TRAF2, TRAF5 and TRAF6. Interacts with NLRP10. Interacts with CARD9. Interacts with INAVA; the interaction takes place upon PRR stimulation. Interacts (via CARD domain) with NGFR (via death domain). Interacts with IRGM; promoting RIPK2 degradation. Polyubiquitinated via both 'Lys-63'- and 'Met-1'-linked polyubiquitin following recruitment by NOD1 or NOD2, creating docking sites for downstream effectors, triggering activation of the NF-kappa-B and MAP kinases signaling. 'Lys-63'-linked polyubiquitination by XIAP is essential for NOD2 signaling and promotes recruitment of the LUBAC complex. Also polyubiquitinated with 'Lys-63'-linked chains by PELI3, BIRC2/c-IAP1 and BIRC3/c-IAP2. Ubiquitinated on Lys-209 via 'Lys-63'-linked by ITCH. Undergoes 'Lys-63'-linked deubiquitination by MYSM1 to attenuate NOD2-mediated inflammation and tissue damage. Polyubiquitinated with 'Lys-63'-linked chains in response to Shigella infection, promoting its SQSTM1/p62-dependent autophagic degradation. Undergoes 'Met-1'-linked polyubiquitination; the head-to-tail linear polyubiquitination is mediated by the LUBAC complex in response to NOD2 stimulation 'Met-1'-linked polyubiquitination. 'Lys-63'-linked polyubiquitination by XIAP is required for recruimtent of the LUBAC complex and subsequent. Linear polyubiquitination is restricted by FAM105B/otulin, probably to limit NOD2-dependent pro-inflammatory signaling activation of NF-kappa-B. In terms of processing, autophosphorylated. Phosphorylated at Ser-176, either via autophosphorylation or by LRRK2, enhancing activity. Autophosphorylation at Tyr-472 is required for effective NOD2 signaling. Autophosphorylation is however not essential for NOD2 signaling. Post-translationally, degraded via selective autophagy following interaction with IRGM. IRGM promotes NOD1/NOD2-RIPK2 RIPosome recruitment to autophagosome membranes. RIPK2 biquitinated via 'Lys-63'-linked chains is then recognized by SQSTM1/p62, leading to the SQSTM1/p62-dependent autophagic degradation of the NOD1/NOD2-RIPK2 RIPosome.

The protein resides in the cytoplasm. The protein localises to the cell membrane. It localises to the endoplasmic reticulum. It carries out the reaction L-seryl-[protein] + ATP = O-phospho-L-seryl-[protein] + ADP + H(+). It catalyses the reaction L-threonyl-[protein] + ATP = O-phospho-L-threonyl-[protein] + ADP + H(+). The enzyme catalyses L-tyrosyl-[protein] + ATP = O-phospho-L-tyrosyl-[protein] + ADP + H(+). Its activity is regulated as follows. In the inactive state, the helix alphaC is packed against the helical, non-phosphorylated activation segment (AS). Upon activation, helix alphaC is displaced and the phosphorylated AS becomes disordered. Its function is as follows. Serine/threonine/tyrosine-protein kinase that plays an essential role in modulation of innate and adaptive immune responses. Acts as a key effector of NOD1 and NOD2 signaling pathways: upon activation by bacterial peptidoglycans, NOD1 and NOD2 oligomerize and recruit RIPK2 via CARD-CARD domains, leading to the formation of RIPK2 filaments. Once recruited, RIPK2 autophosphorylates and undergoes 'Lys-63'-linked polyubiquitination by E3 ubiquitin ligases XIAP, BIRC2 and BIRC3, as well as 'Met-1'-linked (linear) polyubiquitination by the LUBAC complex, becoming a scaffolding protein for downstream effectors. 'Met-1'-linked polyubiquitin chains attached to RIPK2 recruit IKBKG/NEMO, which undergoes 'Lys-63'-linked polyubiquitination in a RIPK2-dependent process. 'Lys-63'-linked polyubiquitin chains attached to RIPK2 serve as docking sites for TAB2 and TAB3 and mediate the recruitment of MAP3K7/TAK1 to IKBKG/NEMO, inducing subsequent activation of IKBKB/IKKB. In turn, NF-kappa-B is released from NF-kappa-B inhibitors and translocates into the nucleus where it activates the transcription of hundreds of genes involved in immune response, growth control, or protection against apoptosis. The protein kinase activity is dispensable for the NOD1 and NOD2 signaling pathways. Contributes to the tyrosine phosphorylation of the guanine exchange factor ARHGEF2 through Src tyrosine kinase leading to NF-kappa-B activation by NOD2. Also involved in adaptive immunity: plays a role during engagement of the T-cell receptor (TCR) in promoting BCL10 phosphorylation and subsequent NF-kappa-B activation. Plays a role in the inactivation of RHOA in response to NGFR signaling. The protein is Receptor-interacting serine/threonine-protein kinase 2 (RIPK2) of Bos taurus (Bovine).